The chain runs to 358 residues: Peptide chain release factor 1 (358 aa).

Gln237 bears the N5-methylglutamine mark.

Belongs to the prokaryotic/mitochondrial release factor family. In terms of processing, methylated by PrmC. Methylation increases the termination efficiency of RF1.

It localises to the cytoplasm. In terms of biological role, peptide chain release factor 1 directs the termination of translation in response to the peptide chain termination codons UAG and UAA. The polypeptide is Peptide chain release factor 1 (Streptomyces avermitilis (strain ATCC 31267 / DSM 46492 / JCM 5070 / NBRC 14893 / NCIMB 12804 / NRRL 8165 / MA-4680)).